A 691-amino-acid polypeptide reads, in one-letter code: Ribonucleoprotein PTB-binding 2 (691 aa).

Residues 1–30 (MAAAAGDGGGEGGAGLGSAAGLGPGPGLRG) are compositionally biased toward gly residues. The segment at 1 to 47 (MAAAAGDGGGEGGAGLGSAAGLGPGPGLRGQGPSAEAHEGAPDPMPA) is disordered. A2 is modified (N-acetylalanine). 3 RRM domains span residues 69-140 (RKIL…LQPT), 142-220 (ALLC…WMDV), and 231-309 (KCLC…FCAP). 2 disordered regions span residues 492 to 522 (PNQH…EGNF) and 543 to 574 (GHHK…GEPP). The span at 548 to 569 (QQSQPKGTEISSGAASKNQTSL) shows a compositional bias: polar residues.

In terms of assembly, interacts with PTBP1 and RAVER1.

The protein localises to the nucleus. The protein resides in the cytoplasm. Functionally, may bind single-stranded nucleic acids. The sequence is that of Ribonucleoprotein PTB-binding 2 (RAVER2) from Homo sapiens (Human).